Here is a 191-residue protein sequence, read N- to C-terminus: Cytochrome b-245 light chain (191 aa).

The Cytoplasmic segment spans residues 2–7 (GQIEWA). A helical membrane pass occupies residues 8 to 30 (MWANEQALASGLILITGGIVATA). The Extracellular portion of the chain corresponds to 31–35 (GQFTQ). A helical membrane pass occupies residues 36 to 53 (WYLGAYSIAAGVLVCLLE). Topologically, residues 54-69 (YPRGKRSKGSTMERCG) are cytoplasmic. The stretch at 70–80 (QKYLTRVVKLF) is an intramembrane region. Topologically, residues 81–86 (GPLTRN) are cytoplasmic. The chain crosses the membrane as a helical span at residues 87–104 (YYIRAFLHLGLAVPAGFL). Position 105 (Leu105) is a topological domain, extracellular. The helical transmembrane segment at 106-126 (ATILGTACLAIASGIYLLAAI) threads the bilayer. The Cytoplasmic portion of the chain corresponds to 127–191 (RGEQWSPIEP…NPMPVNDEVV (65 aa)). The tract at residues 134–191 (IEPKPKERPQIGGTIKQPPSNPPPRPPAEARKKLSEEAAGVPTGGPQENPMPVNDEVV) is disordered. Thr147 bears the Phosphothreonine mark. Residue Lys149 forms a Glycyl lysine isopeptide (Lys-Gly) (interchain with G-Cter in ubiquitin) linkage. A Phosphoserine modification is found at Ser168.

Belongs to the p22phox family. In terms of assembly, component of the phagocyte NADPH oxidase core complex/cytochrome b558 complex, composed of CYBB (heavy chain (beta)) and CYBA (light chain (alpha)). Component of the phagocyte NADPH oxidase complex composed of an obligatory core heterodimer formed by the membrane proteins CYBA and CYBB and the cytosolic regulatory subunits NCF1/p47-phox, NCF2/p67-phox, NCF4/p40-phox and the small GTPase RAC1 or RAC2. Interacts with NCF1 (via SH3 domain). Interacts with SH3PXD2A. Interacts with DUOX1, DUOX2 and TPO. Interacts with NOX4; this interaction mediates superoxide generation. Interacts with calprotectin (S100A8/9). Interacts with GBP7. Interacts with NOXO1. Forms a heterodimer with NOX3 and is essential for activity and cell membrane localization of NOX3. Interacts with NOX1. Post-translationally, phosphorylation at Thr-147 enhances NADPH oxidase activity by promoting NCF1/p47-phox binding. Ubiquitinated at Lys-149 likely by RNF145.

It is found in the cell membrane. In terms of biological role, subunit of NADPH oxidase complexes that is required for the NADPH oxidase activity that generates, in various cell types, superoxide from molecular oxygen utilizing NADPH as an electron donor. Subunit of the phagocyte NADPH oxidase complex that mediates the transfer of electrons from cytosolic NADPH to O2 to produce the superoxide anion (O2(-)). In the activated complex, electrons are first transferred from NADPH to flavin adenine dinucleotide (FAD) and subsequently transferred via two heme molecules to molecular oxygen, producing superoxide through an outer-sphere reaction. Activation of the NADPH oxidase complex is initiated by the assembly of cytosolic subunits of the NADPH oxidase complex with the core NADPH oxidase complex to form a complex at the plasma membrane or phagosomal membrane. This activation process is initiated by phosphorylation dependent binding of the cytosolic NCF1/p47-phox subunit to the C-terminus of CYBA/p22-phox. Aassociates with NOX3 to form a functional NADPH oxidase constitutively generating superoxide. The chain is Cytochrome b-245 light chain from Bison bison (American bison).